Consider the following 236-residue polypeptide: Purine nucleoside phosphorylase DeoD-type (236 aa).

H5 lines the a purine D-ribonucleoside pocket. Phosphate contacts are provided by residues G21, R25, R44, and 88–91; that span reads RIGS. A purine D-ribonucleoside contacts are provided by residues 180–182 and 204–205; these read EME and SD. D205 serves as the catalytic Proton donor.

This sequence belongs to the PNP/UDP phosphorylase family. Homohexamer; trimer of homodimers.

The enzyme catalyses a purine D-ribonucleoside + phosphate = a purine nucleobase + alpha-D-ribose 1-phosphate. The catalysed reaction is a purine 2'-deoxy-D-ribonucleoside + phosphate = a purine nucleobase + 2-deoxy-alpha-D-ribose 1-phosphate. Catalyzes the reversible phosphorolytic breakdown of the N-glycosidic bond in the beta-(deoxy)ribonucleoside molecules, with the formation of the corresponding free purine bases and pentose-1-phosphate. The chain is Purine nucleoside phosphorylase DeoD-type from Tolumonas auensis (strain DSM 9187 / NBRC 110442 / TA 4).